The primary structure comprises 2164 residues: Hemagglutinin A (2164 aa).

A signal peptide spans 1–25; that stretch reads MRKLNSLFSLAVLLSLLCWGQTAAA. Peptidase C25-like regions lie at residues 26-539, 540-991, and 992-1443; these read QGGP…TPPP, GGSS…TPPP, and GGTS…TPPP. Disordered regions lie at residues 493–512 and 520–541; these read WDAP…LSES and SWKT…PPGG. Low complexity predominate over residues 496–508; the sequence is PNGTPNPNPGTTT.

It belongs to the peptidase C25 family.

Agglutinates erythrocytes. This Porphyromonas gingivalis (strain ATCC BAA-308 / W83) protein is Hemagglutinin A (hagA).